Reading from the N-terminus, the 506-residue chain is Glutamate--tRNA ligase (506 aa).

The 'HIGH' region signature appears at 12-22 (PSPTGDPHVGT). A 'KMSKS' region motif is present at residues 253 to 257 (KLSKR). Lysine 256 contributes to the ATP binding site.

The protein belongs to the class-I aminoacyl-tRNA synthetase family. Glutamate--tRNA ligase type 1 subfamily. Monomer.

It localises to the cytoplasm. It carries out the reaction tRNA(Glu) + L-glutamate + ATP = L-glutamyl-tRNA(Glu) + AMP + diphosphate. In terms of biological role, catalyzes the attachment of glutamate to tRNA(Glu) in a two-step reaction: glutamate is first activated by ATP to form Glu-AMP and then transferred to the acceptor end of tRNA(Glu). This chain is Glutamate--tRNA ligase, found in Chlamydia muridarum (strain MoPn / Nigg).